The chain runs to 203 residues: MVSVGKKAPDFEMAGFYKGEFKTFRLSEYLGKWVVLCFYPGDFTFVUATEVSAVAEKYPEFQKLGVEVLSVSVDSVFVHKMWNDNELSKMVEGGIPFPMLSDGGGNVGTLYGVYDPEAGVENRGRFLIDPDGIIQGYEVLILPVGRNVSETLRQIQAFQLVRETKGAEVAPSGWKPGKKTLKPGPGLVGNVYKEWSVKEAFED.

A Thioredoxin domain is found at 2–160; sequence VSVGKKAPDF…TLRQIQAFQL (159 aa). U47 is a catalytic residue. A non-standard amino acid (selenocysteine) is located at residue U47.

It belongs to the peroxiredoxin family. AhpC/Prx1 subfamily.

The enzyme catalyses a hydroperoxide + [thioredoxin]-dithiol = an alcohol + [thioredoxin]-disulfide + H2O. Thiol-specific peroxidase that catalyzes the reduction of hydrogen peroxide and organic hydroperoxides to water and alcohols, respectively. Plays a role in cell protection against oxidative stress by detoxifying peroxides. In Peptoclostridium acidaminophilum (Eubacterium acidaminophilum), this protein is Selenocysteine-containing peroxiredoxin PrxU.